The sequence spans 152 residues: Superoxide dismutase [Cu-Zn] (152 aa).

Residues histidine 45, histidine 47, and histidine 62 each contribute to the Cu cation site. A disulfide bridge connects residues cysteine 56 and cysteine 145. Histidine 62, histidine 70, histidine 79, and aspartate 82 together coordinate Zn(2+). Histidine 119 serves as a coordination point for Cu cation.

This sequence belongs to the Cu-Zn superoxide dismutase family. Homodimer. Cu cation is required as a cofactor. Requires Zn(2+) as cofactor.

It localises to the cytoplasm. The enzyme catalyses 2 superoxide + 2 H(+) = H2O2 + O2. Destroys radicals which are normally produced within the cells and which are toxic to biological systems. This chain is Superoxide dismutase [Cu-Zn] (SODCC), found in Pisum sativum (Garden pea).